A 67-amino-acid polypeptide reads, in one-letter code: ATP synthase F(0) complex subunit 8 (67 aa).

A helical membrane pass occupies residues threonine 8–leucine 24. Lysine 54 carries the post-translational modification N6-acetyllysine; alternate. At lysine 54 the chain carries N6-succinyllysine; alternate. Lysine 57 carries the N6-acetyllysine modification.

This sequence belongs to the ATPase protein 8 family. In terms of assembly, component of the ATP synthase complex composed at least of ATP5F1A/subunit alpha, ATP5F1B/subunit beta, ATP5MC1/subunit c (homooctomer), MT-ATP6/subunit a, MT-ATP8/subunit 8, ATP5ME/subunit e, ATP5MF/subunit f, ATP5MG/subunit g, ATP5MK/subunit k, ATP5MJ/subunit j, ATP5F1C/subunit gamma, ATP5F1D/subunit delta, ATP5F1E/subunit epsilon, ATP5PF/subunit F6, ATP5PB/subunit b, ATP5PD/subunit d, ATP5PO/subunit OSCP. ATP synthase complex consists of a soluble F(1) head domain (subunits alpha(3) and beta(3)) - the catalytic core - and a membrane F(0) domain - the membrane proton channel (subunits c, a, 8, e, f, g, k and j). These two domains are linked by a central stalk (subunits gamma, delta, and epsilon) rotating inside the F1 region and a stationary peripheral stalk (subunits F6, b, d, and OSCP). Interacts with PRICKLE3.

The protein resides in the mitochondrion membrane. Subunit 8, of the mitochondrial membrane ATP synthase complex (F(1)F(0) ATP synthase or Complex V) that produces ATP from ADP in the presence of a proton gradient across the membrane which is generated by electron transport complexes of the respiratory chain. ATP synthase complex consist of a soluble F(1) head domain - the catalytic core - and a membrane F(1) domain - the membrane proton channel. These two domains are linked by a central stalk rotating inside the F(1) region and a stationary peripheral stalk. During catalysis, ATP synthesis in the catalytic domain of F(1) is coupled via a rotary mechanism of the central stalk subunits to proton translocation. In vivo, can only synthesize ATP although its ATP hydrolase activity can be activated artificially in vitro. Part of the complex F(0) domain. The sequence is that of ATP synthase F(0) complex subunit 8 from Cavia porcellus (Guinea pig).